A 454-amino-acid polypeptide reads, in one-letter code: Notoamide E oxidase notB (454 aa).

Residues 15 to 35 form a helical membrane-spanning segment; that stretch reads SPAELTVIIVGLGIAGLTAAI. FAD contacts are provided by glutamate 48 and glycine 61. Residue asparagine 75 is glycosylated (N-linked (GlcNAc...) asparagine). Arginine 121 contributes to the FAD binding site. Active-site residues include arginine 199 and tyrosine 229. 2 residues coordinate FAD: aspartate 322 and glycine 335.

Belongs to the paxM FAD-dependent monooxygenase family. It depends on FAD as a cofactor.

The protein localises to the membrane. It carries out the reaction notoamide E + NADPH + O2 + H(+) = notoamide C + NADP(+) + H2O. It catalyses the reaction notoamide E + NADPH + O2 + H(+) = notoamide D + NADP(+) + H2O. The protein operates within alkaloid biosynthesis. Its function is as follows. FAD-dependent monooxygenase; part of the gene cluster that mediates the biosynthesis of notoamide, a fungal indole alkaloid that belongs to a family of natural products containing a characteristic bicyclo[2.2.2]diazaoctane core. The first step of notoamide biosynthesis involves coupling of L-proline and L-tryptophan by the bimodular NRPS notE, to produce cyclo-L-tryptophan-L-proline called brevianamide F. The reverse prenyltransferase notF then acts as a deoxybrevianamide E synthase and converts brevianamide F to deoxybrevianamide E via reverse prenylation at C-2 of the indole ring leading to the bicyclo[2.2.2]diazaoctane core. Deoxybrevianamide E is further hydroxylated at C-6 of the indole ring, likely catalyzed by the cytochrome P450 monooxygenase notG, to yield 6-hydroxy-deoxybrevianamide E. 6-hydroxy-deoxybrevianamide E is a specific substrate of the prenyltransferase notC for normal prenylation at C-7 to produce 6-hydroxy-7-prenyl-deoxybrevianamide, also called notoamide S. As the proposed pivotal branching point in notoamide biosynthesis, notoamide S can be diverted to notoamide E through an oxidative pyran ring closure putatively catalyzed by either notH cytochrome P450 monooxygenase or the notD FAD-linked oxidoreductase. This step would be followed by an indole 2,3-epoxidation-initiated pinacol-like rearrangement catalyzed by the notB FAD-dependent monooxygenase leading to the formation of notoamide C and notoamide D. On the other hand notoamide S is converted to notoamide T by notH (or notD), a bifunctional oxidase that also functions as the intramolecular Diels-Alderase responsible for generation of (+)-notoamide T. To generate antipodal (-)-notoaminide T, notH' (or notD') in Aspergillus versicolor is expected to catalyze a Diels-Alder reaction leading to the opposite stereochemistry. The remaining oxidoreductase notD (or notH) likely catalyzes the oxidative pyran ring formation to yield (+)-stephacidin A. The FAD-dependent monooxygenase notI is highly similar to notB and is predicted to catalyze a similar conversion from (+)-stephacidin A to (-)-notoamide B via the 2,3-epoxidation of (+)-stephacidin A followed by a pinacol-type rearrangement. Finally, it remains unclear which enzyme could be responsible for the final hydroxylation steps leading to notoamide A and sclerotiamide. This is Notoamide E oxidase notB from Aspergillus sp. (strain MF297-2).